A 471-amino-acid chain; its full sequence is Ubiquitin carboxyl-terminal hydrolase 8 (471 aa).

C4, H6, C46, C49, C60, C63, C68, H73, H77, H83, C96, and C99 together coordinate Zn(2+). Residues 22–122 (KTCNAARYIL…ILAKYWDDVC (101 aa)) form a UBP-type; degenerate zinc finger. In terms of domain architecture, USP spans 137–468 (SGLINMGSTC…QAYLLFYTIR (332 aa)). C146 functions as the Nucleophile in the catalytic mechanism. Zn(2+) is bound by residues H170, C174, C182, C185, H250, C271, C273, H276, C289, C292, C336, and C339. H427 (proton acceptor) is an active-site residue.

This sequence belongs to the peptidase C19 family. UBP8 subfamily. Component of the 1.8 MDa SAGA (Spt-Ada-Gcn5 acetyltransferase) complex, which is composed of 19 subunits TRA1, SPT7, TAF5, NGG1/ADA3, SGF73, SPT20/ADA5, SPT8, TAF12, TAF6, HFI1/ADA1, UBP8, GCN5, ADA2, SPT3, SGF29, TAF10, TAF9, SGF11 and SUS1. The SAGA complex is composed of 4 modules, namely the HAT (histone acetyltransferase) module (GCN5, ADA2, NGG1/ADA3 and SGF29), the DUB (deubiquitinating) module (UBP8, SGF11, SGF73 and SUS1), the core or TAF (TBP-associated factor) module (TAF5, TAF6, TAF9, TAF10 and TAF12), and the Tra1 or SPT (Suppressor of Ty) module (TRA1, HFI1/ADA1, SPT3, SPT7, SPT8 and SPT20/ADA5). The Tra1/SPT module binds activators, the core module recruits TBP (TATA-binding protein), the HAT module contains the histone H3 acetyltransferase GCN5, and the DUB module comprises the histone H2B deubiquitinase UBP8. Also identified in an altered form of SAGA, named SALSA (SAGA altered, Spt8 absent) or SLIK (SAGA-like) complex, which contains a C-terminal truncated form of SPT7 and is missing SPT8. However, it has been shown that the SAGA and SAGA-like SALSA/SLIK transcriptional coactivators are structurally and biochemically equivalent.

The protein localises to the nucleus. It carries out the reaction Thiol-dependent hydrolysis of ester, thioester, amide, peptide and isopeptide bonds formed by the C-terminal Gly of ubiquitin (a 76-residue protein attached to proteins as an intracellular targeting signal).. Functionally, histone deubiquitinating enzyme component of the transcription coactivator SAGA complex. SAGA acts as a general cofactor required for essentially all RNA polymerase II transcription. At the promoters, SAGA is required for transcription pre-initiation complex (PIC) recruitment. It influences RNA polymerase II transcriptional activity through different activities such as TBP interaction (via core/TAF module) and promoter selectivity, interaction with transcription activators (via Tra1/SPT module), and chromatin modification through histone acetylation (via HAT module) and deubiquitination (via DUB module). SAGA preferentially acetylates histones H3 (to form H3K9ac, H3K14ac, H3K18ac and H3K23ac) and H2B and deubiquitinates histone H2B. SAGA interacts with DNA via upstream activating sequences (UASs). Also identified in a modified version of SAGA named SALSA or SLIK. The cleavage of SPT7 and the absence of the SPT8 subunit in SLIK neither drive any major conformational differences in its structure compared with SAGA, nor significantly affect HAT, DUB, or DNA-binding activities. Within the DUB module, the correctly positioned zinc finger domains of SGF11 and SGF73 are both required to fully activate the ubiquitin hydrolase UBP8. The DUB module is also linked to the splicing efficiency of many transcripts. This Saccharomyces cerevisiae (strain ATCC 204508 / S288c) (Baker's yeast) protein is Ubiquitin carboxyl-terminal hydrolase 8 (UBP8).